Here is a 151-residue protein sequence, read N- to C-terminus: 3-hydroxyacyl-[acyl-carrier-protein] dehydratase FabZ (151 aa).

Histidine 56 is a catalytic residue.

This sequence belongs to the thioester dehydratase family. FabZ subfamily.

It is found in the cytoplasm. It catalyses the reaction a (3R)-hydroxyacyl-[ACP] = a (2E)-enoyl-[ACP] + H2O. Its function is as follows. Involved in unsaturated fatty acids biosynthesis. Catalyzes the dehydration of short chain beta-hydroxyacyl-ACPs and long chain saturated and unsaturated beta-hydroxyacyl-ACPs. This Rhodopseudomonas palustris (strain ATCC BAA-98 / CGA009) protein is 3-hydroxyacyl-[acyl-carrier-protein] dehydratase FabZ.